Here is a 455-residue protein sequence, read N- to C-terminus: MVVLNPMTLGIYLQLFFLSIVSQPTFINSVLPISAALPSLDQKKRGGHKACCLLTPPPPPLFPPPFFRGGRSPLLSPDMKNLMLELETSQSPCMQGSLGSPGPPGPQGPPGLPGKTGPKGEKGELGRPGRKGRPGPPGVPGMPGPIGWPGPEGPRGEKGDLGMMGLPGSRGPMGSKGYPGSRGEKGSRGEKGDLGPKGEKGFPGFPGMLGQKGEMGPKGEPGIAGHRGPTGRPGKRGKQGQKGDSGVMGPPGKPGPSGQPGRPGPPGPPPAGQLIMGPKGERGFPGPPGRCLCGPTMNVNNPSYGESVYGPSSPRVPVIFVVNNQEELERLNTQNAIAFRRDQRSLYFKDSLGWLPIQLTPFYPVDYTADQHGTCGDGLLQPGEECDDGNSDVGDDCIRCHRAYCGDGHRHEGVEDCDGSDFGYLTCETYLPGSYGDLQCTQYCYIDSTPCRYFT.

The first 22 residues, 1-22, serve as a signal peptide directing secretion; that stretch reads MVVLNPMTLGIYLQLFFLSIVS. The PRAD stretch occupies residues 51 to 67; sequence CCLLTPPPPPLFPPPFF. A disordered region spans residues 90 to 282; that stretch reads QSPCMQGSLG…QLIMGPKGER (193 aa). 2 consecutive Collagen-like domains span residues 96-269 and 277-291; these read GSLG…PGPP and GPKG…PGRC. Residues 101–112 show a composition bias toward pro residues; that stretch reads PGPPGPQGPPGL. Basic and acidic residues predominate over residues 118–127; it reads PKGEKGELGR. The interval 130 to 133 is heparan sulfate proteoglycan binding; the sequence is RKGR. Residues 134-152 are compositionally biased toward pro residues; sequence PGPPGVPGMPGPIGWPGPE. The segment covering 182–200 has biased composition (basic and acidic residues); that stretch reads RGEKGSRGEKGDLGPKGEK. The tract at residues 235–238 is heparan sulfate proteoglycan binding; the sequence is KRGK. The segment covering 262-271 has biased composition (pro residues); that stretch reads RPGPPGPPPA.

It belongs to the COLQ family. Homotrimer. Component of the asymmetric form of AChE, a disulfide-bonded oligomer composed of the collagenic subunits (Q) and a variable number of asymmetric catalytic subunits (T). The N-terminal of a collagenic subunit (Q) associates with the C-terminal of a catalytic subunit (T). The triple-helical tail is stabilized by disulfide bonds at each end. In terms of tissue distribution, found at the end plate of skeletal muscle.

The protein resides in the synapse. Functionally, anchors the catalytic subunits of asymmetric AChE to the synaptic basal lamina. The protein is Acetylcholinesterase collagenic tail peptide (COLQ) of Homo sapiens (Human).